A 169-amino-acid chain; its full sequence is Glycine-rich RNA-binding protein 8 (169 aa).

Positions 6–84 (YRCFVGGLAW…RVITVNEAQS (79 aa)) constitute an RRM domain. ADP-ribosylarginine; by HopU1 is present on Arg47. The interval 80–99 (NEAQSRGSGGGGGGRGGSGG) is disordered. Gly residues predominate over residues 86-99 (GSGGGGGGRGGSGG). The interval 86–168 (GSGGGGGGRG…GGSYGGGGGG (83 aa)) is glycine-rich (GR) required for cell-to-cell movement. The nuclear targeting sequence (M9) stretch occupies residues 95 to 143 (GGSGGGYRSGGGGGYSGGGGGGYSGGGGGGYERRSGGYGSGGGGGGRGY). A Phosphoserine modification is found at Ser103. Positions 130-169 (GGYGSGGGGGGRGYGGGGRREGGGYGGGDGGSYGGGGGGW) are disordered.

This sequence belongs to the GR-RBP family. Interacts with TRN1. Binds to small phloem-mobile single-stranded RNAs (ss-sRNA, e.g. small interfering RNA (siRNA) and microRNA (miRNA)) in the phloeme exudate, including viral-derived sRNA (vsiRNA). ADP-ribosylated by the Pseudomonas syringae type III effector HopU1. ADP-ribosylation reduces the ability of the protein to bind RNA. In terms of tissue distribution, ubiquitous.

The protein resides in the cytoplasm. The protein localises to the nucleus. It is found in the secreted. Functionally, plays a role in RNA transcription or processing during stress. Binds RNAs and DNAs sequence with a preference to single-stranded nucleic acids. Involved in mRNA alternative splicing of numerous targets by modulating splice site selection. Negatively regulates the circadian oscillations of its own transcript as well as RBG7 transcript. Forms an interlocked post-transcriptional negative feedback loop with the RBG7 autoregulatory circuit. Both proteins negatively autoregulate and reciprocally crossregulate by binding to their pre-mRNAs and promoting unproductive splicing coupled to degradation via the NMD pathway. Target of the Pseudomonas syringae type III effector HopU1. Mediates cell-to-cell trafficking of RNA interference (RNAi) signals (small RNAs (sRNA), e.g. small interfering RNA (siRNA) and microRNA (miRNA)) which regulate growth and development, as well as responses to environmental inputs, including pathogen attack; can compromise zucchini yellow mosaic virus (ZYMV) and tobacco rattle virus (TRV) infections at the early stage. The chain is Glycine-rich RNA-binding protein 8 from Arabidopsis thaliana (Mouse-ear cress).